Reading from the N-terminus, the 387-residue chain is Succinate--CoA ligase [ADP-forming] subunit beta (387 aa).

The ATP-grasp domain occupies 9–244 (KQLFAEYGIP…KTQEDETEVL (236 aa)). ATP is bound by residues K46, 53–55 (GRG), G102, and E107. Residues N199 and D213 each coordinate Mg(2+). Residues N264 and 321 to 323 (GIV) each bind substrate.

Belongs to the succinate/malate CoA ligase beta subunit family. Heterotetramer of two alpha and two beta subunits. Mg(2+) is required as a cofactor.

The enzyme catalyses succinate + ATP + CoA = succinyl-CoA + ADP + phosphate. It carries out the reaction GTP + succinate + CoA = succinyl-CoA + GDP + phosphate. It functions in the pathway carbohydrate metabolism; tricarboxylic acid cycle; succinate from succinyl-CoA (ligase route): step 1/1. In terms of biological role, succinyl-CoA synthetase functions in the citric acid cycle (TCA), coupling the hydrolysis of succinyl-CoA to the synthesis of either ATP or GTP and thus represents the only step of substrate-level phosphorylation in the TCA. The beta subunit provides nucleotide specificity of the enzyme and binds the substrate succinate, while the binding sites for coenzyme A and phosphate are found in the alpha subunit. This Xylella fastidiosa (strain M23) protein is Succinate--CoA ligase [ADP-forming] subunit beta.